A 272-amino-acid polypeptide reads, in one-letter code: Lyso-glycine lipid O-acyltransferase (272 aa).

The protein belongs to the O-acyltransferase GlsA family.

The catalysed reaction is a lyso-glycine lipid + a fatty acyl-[ACP] = a glycine lipid + holo-[ACP]. It carries out the reaction N-[(3R)-3-hydroxyhexadecanoyl]-glycine + hexadecanoyl-[ACP] = N-[(3R)-3-(hexadecanoyloxy)hexadecanoyl]-glycine + holo-[ACP]. It participates in lipid metabolism. Its function is as follows. Is involved in the production of glycine lipids (GL), which are phosphorus-free membrane lipids important for fitness during growth of the human gut bacterium B.thetaiotaomicron in vivo and in vitro. Catalyzes the second step of GL biosynthesis, i.e. the O-acylation of the hydroxyl group of lyso-glycine lipids, resulting in the production of the mature diacylated glycine lipids. The polypeptide is Lyso-glycine lipid O-acyltransferase (Bacteroides thetaiotaomicron (strain ATCC 29148 / DSM 2079 / JCM 5827 / CCUG 10774 / NCTC 10582 / VPI-5482 / E50)).